A 253-amino-acid chain; its full sequence is Ubiquinone/menaquinone biosynthesis C-methyltransferase UbiE (253 aa).

Residues T76, D97, and 125–126 (NA) contribute to the S-adenosyl-L-methionine site.

The protein belongs to the class I-like SAM-binding methyltransferase superfamily. MenG/UbiE family.

The catalysed reaction is a 2-demethylmenaquinol + S-adenosyl-L-methionine = a menaquinol + S-adenosyl-L-homocysteine + H(+). It carries out the reaction a 2-methoxy-6-(all-trans-polyprenyl)benzene-1,4-diol + S-adenosyl-L-methionine = a 5-methoxy-2-methyl-3-(all-trans-polyprenyl)benzene-1,4-diol + S-adenosyl-L-homocysteine + H(+). It participates in quinol/quinone metabolism; menaquinone biosynthesis; menaquinol from 1,4-dihydroxy-2-naphthoate: step 2/2. It functions in the pathway cofactor biosynthesis; ubiquinone biosynthesis. Its function is as follows. Methyltransferase required for the conversion of demethylmenaquinol (DMKH2) to menaquinol (MKH2) and the conversion of 2-polyprenyl-6-methoxy-1,4-benzoquinol (DDMQH2) to 2-polyprenyl-3-methyl-6-methoxy-1,4-benzoquinol (DMQH2). This is Ubiquinone/menaquinone biosynthesis C-methyltransferase UbiE from Rhodopseudomonas palustris (strain HaA2).